Consider the following 129-residue polypeptide: Small ribosomal subunit protein uS11 (129 aa).

Belongs to the universal ribosomal protein uS11 family. In terms of assembly, part of the 30S ribosomal subunit. Interacts with proteins S7 and S18. Binds to IF-3.

In terms of biological role, located on the platform of the 30S subunit, it bridges several disparate RNA helices of the 16S rRNA. Forms part of the Shine-Dalgarno cleft in the 70S ribosome. The polypeptide is Small ribosomal subunit protein uS11 (Methylorubrum populi (strain ATCC BAA-705 / NCIMB 13946 / BJ001) (Methylobacterium populi)).